Here is a 594-residue protein sequence, read N- to C-terminus: Tripeptidyl-peptidase sed4 (594 aa).

Positions 1–20 are cleaved as a signal peptide; the sequence is MLSSTLYAGWLLSLAAPALC. Residues 21-187 constitute a propeptide, removed in mature form; the sequence is VVQEKLSAVP…AVKLPALPRR (167 aa). 3 N-linked (GlcNAc...) asparagine glycosylation sites follow: N191, N229, and N250. The Peptidase S53 domain maps to 197-594; sequence LITPDCLVEM…MKLKELVLSL (398 aa). Active-site charge relay system residues include E272, D276, and S494. Residues D536 and I537 each contribute to the Ca(2+) site. N-linked (GlcNAc...) asparagine glycosylation is present at N568. Positions 572 and 574 each coordinate Ca(2+).

Requires Ca(2+) as cofactor. Post-translationally, N-glycosylated.

The protein localises to the secreted. Its subcellular location is the extracellular space. The enzyme catalyses Release of an N-terminal tripeptide from a polypeptide.. Secreted tripeptidyl-peptidase which degrades proteins at acidic pHs and is involved in virulence. The sequence is that of Tripeptidyl-peptidase sed4 (sed4) from Aspergillus fumigatus (strain ATCC MYA-4609 / CBS 101355 / FGSC A1100 / Af293) (Neosartorya fumigata).